A 143-amino-acid chain; its full sequence is Spanin, inner membrane subunit (143 aa).

Topologically, residues Met-1–Lys-7 are cytoplasmic. The helical; Signal-anchor for type II membrane protein transmembrane segment at Leu-8–Leu-24 threads the bilayer. At Gly-25–Lys-143 the chain is on the periplasmic side.

The protein belongs to the T7likevirus i-spanin family. Interacts (via C-terminus) with the spanin outer lipoprotein subunit (o-spanin) (via C-terminus). Part of the spanin complex which spans the entire periplasmic space. The spanin complex is composed of spanin inner membrane subunit and spanin outer membrane subunit.

It localises to the host cell inner membrane. Functionally, component of the spanin complex that disrupts the host outer membrane and participates in cell lysis during virus exit. The spanin complex conducts the final step in host lysis by disrupting the outer membrane after holin and endolysin action have permeabilized the inner membrane and degraded the host peptidoglycans. Host outer membrane disruption is possibly due to local fusion between the inner and outer membrane performed by the spanin complex. The protein is Spanin, inner membrane subunit of Escherichia coli (Bacteriophage T7).